We begin with the raw amino-acid sequence, 541 residues long: Propionyl-CoA carboxylase beta chain, mitochondrial (541 aa).

The transit peptide at 1–28 (MAAVIRIRAMAAGTRLRVLNCGLGTTIR) directs the protein to the mitochondrion. The CoA carboxyltransferase N-terminal domain maps to 34–292 (PVSVNERIEN…SNQDPASIRE (259 aa)). Positions 34–535 (PVSVNERIEN…SKKVHRPWRK (502 aa)) are carboxyltransferase. At serine 73 the chain carries Phosphoserine. Lysine 101 carries the post-translational modification N6-acetyllysine; alternate. Lysine 101 bears the N6-succinyllysine; alternate mark. An N6-succinyllysine modification is found at lysine 250. The region spanning 296–535 (PSDRLVPELD…SKKVHRPWRK (240 aa)) is the CoA carboxyltransferase C-terminal domain. Residues 327–360 (DEREFFEIMPNYAKNIVIGFARMNGRTVGIVGNQ) form an acyl-CoA binding region. Residues lysine 476 and lysine 491 each carry the N6-acetyllysine; alternate modification. 2 positions are modified to N6-succinyllysine; alternate: lysine 476 and lysine 491.

This sequence belongs to the AccD/PCCB family. In terms of assembly, the holoenzyme is a dodecamer composed of 6 PCCA/alpha subunits and 6 PCCB/beta subunits.

It localises to the mitochondrion matrix. It catalyses the reaction propanoyl-CoA + hydrogencarbonate + ATP = (S)-methylmalonyl-CoA + ADP + phosphate + H(+). It carries out the reaction butanoyl-CoA + hydrogencarbonate + ATP = (2S)-ethylmalonyl-CoA + ADP + phosphate + H(+). The protein operates within metabolic intermediate metabolism; propanoyl-CoA degradation; succinyl-CoA from propanoyl-CoA: step 1/3. This is one of the 2 subunits of the biotin-dependent propionyl-CoA carboxylase (PCC), a mitochondrial enzyme involved in the catabolism of odd chain fatty acids, branched-chain amino acids isoleucine, threonine, methionine, and valine and other metabolites. Propionyl-CoA carboxylase catalyzes the carboxylation of propionyl-CoA/propanoyl-CoA to D-methylmalonyl-CoA/(S)-methylmalonyl-CoA. Within the holoenzyme, the alpha subunit catalyzes the ATP-dependent carboxylation of the biotin carried by the biotin carboxyl carrier (BCC) domain, while the beta subunit then transfers the carboxyl group from carboxylated biotin to propionyl-CoA. Propionyl-CoA carboxylase also significantly acts on butyryl-CoA/butanoyl-CoA, which is converted to ethylmalonyl-CoA/(2S)-ethylmalonyl-CoA. Other alternative minor substrates include (2E)-butenoyl-CoA/crotonoyl-CoA. In Rattus norvegicus (Rat), this protein is Propionyl-CoA carboxylase beta chain, mitochondrial.